We begin with the raw amino-acid sequence, 410 residues long: 23S rRNA (uracil(747)-C(5))-methyltransferase (410 aa).

[4Fe-4S] cluster is bound by residues C61, C67, C70, and C137. The S-adenosyl-L-methionine site is built by Q253, Y279, E300, and D341. C367 acts as the Nucleophile in catalysis.

The protein belongs to the class I-like SAM-binding methyltransferase superfamily. RNA M5U methyltransferase family.

It catalyses the reaction uridine(747) in 23S rRNA + S-adenosyl-L-methionine = 5-methyluridine(747) in 23S rRNA + S-adenosyl-L-homocysteine + H(+). With respect to regulation, activated by magnesium ions. Functionally, catalyzes the formation of 5-methyl-uridine at position equivalent to 747 (m5U747) in 23S rRNA (m5U859 in the P.abyssi numbering). In Pyrococcus abyssi (strain GE5 / Orsay), this protein is 23S rRNA (uracil(747)-C(5))-methyltransferase.